Reading from the N-terminus, the 610-residue chain is Anthocyanin regulatory Lc protein (610 aa).

Disordered stretches follow at residues 402-422 (ATGA…MSER) and 468-524 (LESS…PVLT). A bHLH domain is found at 412-461 (TGTKNHVMSERKRREKLNEMFLVLKSLLPSIHRVNKASILAETIAYLKEL). Polar residues predominate over residues 481 to 495 (TTTRLITRPSRGNNE). Positions 508-519 (KSPELGRDDVER) are enriched in basic and acidic residues.

It belongs to the bHLH protein family. As to quaternary structure, efficient DNA binding requires dimerization with another bHLH protein.

Its subcellular location is the nucleus. Functionally, putative transcriptional activator. Controls tissue-specific synthesis of anthocyanin pigments in various parts of the maize plant. The chain is Anthocyanin regulatory Lc protein (LC) from Zea mays (Maize).